Consider the following 363-residue polypeptide: Peptide chain release factor 1 (363 aa).

An N5-methylglutamine modification is found at Gln237. The segment covering 284–296 has biased composition (basic and acidic residues); sequence EDEKRRSAEESTR. Positions 284–305 are disordered; that stretch reads EDEKRRSAEESTRRSLVASGDR.

This sequence belongs to the prokaryotic/mitochondrial release factor family. Methylated by PrmC. Methylation increases the termination efficiency of RF1.

Its subcellular location is the cytoplasm. Functionally, peptide chain release factor 1 directs the termination of translation in response to the peptide chain termination codons UAG and UAA. The protein is Peptide chain release factor 1 of Shewanella baltica (strain OS185).